The following is a 945-amino-acid chain: Isoleucine--tRNA ligase (945 aa).

The 'HIGH' region motif lies at 66–76; it reads PYANGDIHLGH. Residue Glu581 participates in L-isoleucyl-5'-AMP binding. The short motif at 622-626 is the 'KMSKS' region element; it reads KMSKS. Lys625 provides a ligand contact to ATP. 4 residues coordinate Zn(2+): Cys908, Cys911, Cys928, and Cys931.

Belongs to the class-I aminoacyl-tRNA synthetase family. IleS type 1 subfamily. Monomer. Zn(2+) serves as cofactor.

The protein localises to the cytoplasm. The enzyme catalyses tRNA(Ile) + L-isoleucine + ATP = L-isoleucyl-tRNA(Ile) + AMP + diphosphate. Functionally, catalyzes the attachment of isoleucine to tRNA(Ile). As IleRS can inadvertently accommodate and process structurally similar amino acids such as valine, to avoid such errors it has two additional distinct tRNA(Ile)-dependent editing activities. One activity is designated as 'pretransfer' editing and involves the hydrolysis of activated Val-AMP. The other activity is designated 'posttransfer' editing and involves deacylation of mischarged Val-tRNA(Ile). In Paraburkholderia phymatum (strain DSM 17167 / CIP 108236 / LMG 21445 / STM815) (Burkholderia phymatum), this protein is Isoleucine--tRNA ligase.